Here is a 74-residue protein sequence, read N- to C-terminus: Cyclin-dependent kinases regulatory subunit (74 aa).

It belongs to the CKS family. Forms a homohexamer that can probably bind six kinase subunits.

Its function is as follows. Binds to the catalytic subunit of the cyclin dependent kinases Cdk1 and Cdk2, and is essential for their biological function. This is Cyclin-dependent kinases regulatory subunit (Cks30A) from Drosophila melanogaster (Fruit fly).